Consider the following 140-residue polypeptide: Peptide methionine sulfoxide reductase MsrB (140 aa).

One can recognise a MsrB domain in the interval 9–131; the sequence is DALWREKLTP…NSASIVLDSE (123 aa). 4 residues coordinate Zn(2+): Cys48, Cys51, Cys97, and Cys100. Cys120 acts as the Nucleophile in catalysis.

This sequence belongs to the MsrB Met sulfoxide reductase family. Zn(2+) serves as cofactor.

It catalyses the reaction L-methionyl-[protein] + [thioredoxin]-disulfide + H2O = L-methionyl-(R)-S-oxide-[protein] + [thioredoxin]-dithiol. The protein is Peptide methionine sulfoxide reductase MsrB of Cellvibrio japonicus (strain Ueda107) (Pseudomonas fluorescens subsp. cellulosa).